The primary structure comprises 258 residues: Imidazole glycerol phosphate synthase subunit HisF (258 aa).

Active-site residues include Asp11 and Asp130.

This sequence belongs to the HisA/HisF family. Heterodimer of HisH and HisF.

Its subcellular location is the cytoplasm. It catalyses the reaction 5-[(5-phospho-1-deoxy-D-ribulos-1-ylimino)methylamino]-1-(5-phospho-beta-D-ribosyl)imidazole-4-carboxamide + L-glutamine = D-erythro-1-(imidazol-4-yl)glycerol 3-phosphate + 5-amino-1-(5-phospho-beta-D-ribosyl)imidazole-4-carboxamide + L-glutamate + H(+). Its pathway is amino-acid biosynthesis; L-histidine biosynthesis; L-histidine from 5-phospho-alpha-D-ribose 1-diphosphate: step 5/9. IGPS catalyzes the conversion of PRFAR and glutamine to IGP, AICAR and glutamate. The HisF subunit catalyzes the cyclization activity that produces IGP and AICAR from PRFAR using the ammonia provided by the HisH subunit. The sequence is that of Imidazole glycerol phosphate synthase subunit HisF from Methylorubrum extorquens (strain CM4 / NCIMB 13688) (Methylobacterium extorquens).